Here is a 240-residue protein sequence, read N- to C-terminus: UDP-2,3-diacylglucosamine hydrolase (240 aa).

Mn(2+) contacts are provided by Asp-7, His-9, Asp-40, Asn-78, and His-113. 78–79 (NR) contributes to the substrate binding site. 5 residues coordinate substrate: Asp-121, Ser-159, Thr-163, Lys-166, and His-194. Residues His-194 and His-196 each contribute to the Mn(2+) site.

The protein belongs to the LpxH family. Mn(2+) is required as a cofactor.

The protein resides in the cell inner membrane. The enzyme catalyses UDP-2-N,3-O-bis[(3R)-3-hydroxytetradecanoyl]-alpha-D-glucosamine + H2O = 2-N,3-O-bis[(3R)-3-hydroxytetradecanoyl]-alpha-D-glucosaminyl 1-phosphate + UMP + 2 H(+). It participates in glycolipid biosynthesis; lipid IV(A) biosynthesis; lipid IV(A) from (3R)-3-hydroxytetradecanoyl-[acyl-carrier-protein] and UDP-N-acetyl-alpha-D-glucosamine: step 4/6. Its function is as follows. Hydrolyzes the pyrophosphate bond of UDP-2,3-diacylglucosamine to yield 2,3-diacylglucosamine 1-phosphate (lipid X) and UMP by catalyzing the attack of water at the alpha-P atom. Involved in the biosynthesis of lipid A, a phosphorylated glycolipid that anchors the lipopolysaccharide to the outer membrane of the cell. The sequence is that of UDP-2,3-diacylglucosamine hydrolase from Pseudomonas entomophila (strain L48).